Here is a 101-residue protein sequence, read N- to C-terminus: Small ribosomal subunit protein uS14 (101 aa).

A disordered region spans residues 32–62 (GDAKRSDAEREAARLGLQKLPRNANPTRQRN). Over residues 33 to 44 (DAKRSDAEREAA) the composition is skewed to basic and acidic residues.

It belongs to the universal ribosomal protein uS14 family. In terms of assembly, part of the 30S ribosomal subunit. Contacts proteins S3 and S10.

Functionally, binds 16S rRNA, required for the assembly of 30S particles and may also be responsible for determining the conformation of the 16S rRNA at the A site. The protein is Small ribosomal subunit protein uS14 of Verminephrobacter eiseniae (strain EF01-2).